An 812-amino-acid chain; its full sequence is Lon protease (812 aa).

The region spanning 11-204 is the Lon N-terminal domain; it reads IPVLPLRDVV…YLMAMMESEI (194 aa). 356 to 363 is an ATP binding site; sequence GPPGVGKT. The 182-residue stretch at 592-773 folds into the Lon proteolytic domain; it reads ENRVGQVTGL…EEEQTLSLQN (182 aa). Residues Ser679 and Lys722 contribute to the active site. Positions 745 to 764 are enriched in basic and acidic residues; the sequence is KENPDNAKADQDRHPVKNNE. The interval 745-766 is disordered; it reads KENPDNAKADQDRHPVKNNEEE.

The protein belongs to the peptidase S16 family. As to quaternary structure, homohexamer. Organized in a ring with a central cavity. ATP binding and hydrolysis do not affect the oligomeric state of the enzyme.

The protein localises to the cytoplasm. It catalyses the reaction Hydrolysis of proteins in presence of ATP.. With respect to regulation, contains an allosteric site (distinct from its active site), whose occupancy by an unfolded polypeptide leads to enzyme activation. Its function is as follows. ATP-dependent serine protease that mediates the selective degradation of mutant and abnormal proteins as well as certain short-lived regulatory proteins. Required for cellular homeostasis and for survival from DNA damage and developmental changes induced by stress. Degrades polypeptides processively to yield small peptide fragments that are 5 to 10 amino acids long. Binds to DNA in a double-stranded, site-specific manner. Endogenous substrates include the regulatory proteins RcsA and SulA, the transcriptional activator SoxS, and UmuD. Its overproduction specifically inhibits translation through at least two different pathways, one of them being the YoeB-YefM toxin-antitoxin system. The chain is Lon protease from Shigella dysenteriae serotype 1 (strain Sd197).